The sequence spans 518 residues: Coiled-coil domain-containing protein 82 (518 aa).

Residues 1–14 show a composition bias toward basic residues; it reads MVHVRRHETRKNSK. Residues 1–266 are disordered; the sequence is MVHVRRHETR…EDDYRYDEDG (266 aa). Residues 16-27 are compositionally biased toward basic and acidic residues; it reads QKPEQKSRVDWH. A compositionally biased stretch (acidic residues) spans 38–67; sequence DSDEELDSNEELDSDEEHDSGESIDSDEEL. Over residues 68–89 the composition is skewed to basic and acidic residues; it reads DISKKSDINELPEKETELKLIK. Residues 92 to 107 show a composition bias toward polar residues; it reads SQGSNSKHLTNTSNSS. A compositionally biased stretch (basic and acidic residues) spans 111 to 127; sequence EQLKETKHNDLPDDEAH. Phosphoserine is present on residues S170 and S194. Acidic residues predominate over residues 191 to 201; the sequence is DECSSLEMEQE. Residue T202 is modified to Phosphothreonine. The stretch at 204 to 232 forms a coiled coil; it reads EKSSAARKREYHQKLQELSERSRQRRRRN. The segment covering 215–225 has biased composition (basic and acidic residues); it reads HQKLQELSERS. Over residues 249–266 the composition is skewed to acidic residues; the sequence is GEEDEDEDEDDYRYDEDG. S305 is subject to Phosphoserine.

This is Coiled-coil domain-containing protein 82 (Ccdc82) from Mus musculus (Mouse).